The primary structure comprises 873 residues: Bifunctional uridylyltransferase/uridylyl-removing enzyme (873 aa).

The segment at methionine 1 to isoleucine 332 is uridylyltransferase. The tract at residues isoleucine 333–threonine 692 is uridylyl-removing. Positions valine 451–leucine 573 constitute an HD domain. 2 ACT domains span residues glutamate 693–arginine 773 and leucine 800–proline 873.

It belongs to the GlnD family. Mg(2+) is required as a cofactor.

It carries out the reaction [protein-PII]-L-tyrosine + UTP = [protein-PII]-uridylyl-L-tyrosine + diphosphate. It catalyses the reaction [protein-PII]-uridylyl-L-tyrosine + H2O = [protein-PII]-L-tyrosine + UMP + H(+). With respect to regulation, uridylyltransferase (UTase) activity is inhibited by glutamine, while glutamine activates uridylyl-removing (UR) activity. Its function is as follows. Modifies, by uridylylation and deuridylylation, the PII regulatory proteins (GlnB and homologs), in response to the nitrogen status of the cell that GlnD senses through the glutamine level. Under low glutamine levels, catalyzes the conversion of the PII proteins and UTP to PII-UMP and PPi, while under higher glutamine levels, GlnD hydrolyzes PII-UMP to PII and UMP (deuridylylation). Thus, controls uridylylation state and activity of the PII proteins, and plays an important role in the regulation of nitrogen assimilation and metabolism. This chain is Bifunctional uridylyltransferase/uridylyl-removing enzyme, found in Vibrio vulnificus (strain CMCP6).